The sequence spans 284 residues: D-tagatose-1,6-bisphosphate aldolase subunit GatY (284 aa).

Asp-82 serves as the catalytic Proton donor. The Zn(2+) site is built by His-83 and His-180. Gly-181 contacts dihydroxyacetone phosphate. Residue His-208 coordinates Zn(2+). Dihydroxyacetone phosphate-binding positions include 209–211 (GAS) and 230–233 (NVAT).

It belongs to the class II fructose-bisphosphate aldolase family. TagBP aldolase GatY subfamily. As to quaternary structure, forms a complex with GatZ. It depends on Zn(2+) as a cofactor.

It catalyses the reaction D-tagatofuranose 1,6-bisphosphate = D-glyceraldehyde 3-phosphate + dihydroxyacetone phosphate. Its pathway is carbohydrate metabolism; D-tagatose 6-phosphate degradation; D-glyceraldehyde 3-phosphate and glycerone phosphate from D-tagatose 6-phosphate: step 2/2. In terms of biological role, catalytic subunit of the tagatose-1,6-bisphosphate aldolase GatYZ, which catalyzes the reversible aldol condensation of dihydroxyacetone phosphate (DHAP or glycerone-phosphate) with glyceraldehyde 3-phosphate (G3P) to produce tagatose 1,6-bisphosphate (TBP). Requires GatZ subunit for full activity and stability. Is involved in the catabolism of galactitol. The polypeptide is D-tagatose-1,6-bisphosphate aldolase subunit GatY (Shigella dysenteriae serotype 1 (strain Sd197)).